We begin with the raw amino-acid sequence, 159 residues long: Transcription elongation factor GreA (159 aa).

Residues 43–75 adopt a coiled-coil conformation; sequence LSENAEYDAAREEQSQLEAKIGEIENKLASATI.

The protein belongs to the GreA/GreB family.

Its function is as follows. Necessary for efficient RNA polymerase transcription elongation past template-encoded arresting sites. The arresting sites in DNA have the property of trapping a certain fraction of elongating RNA polymerases that pass through, resulting in locked ternary complexes. Cleavage of the nascent transcript by cleavage factors such as GreA or GreB allows the resumption of elongation from the new 3'terminus. GreA releases sequences of 2 to 3 nucleotides. This Chlorobaculum tepidum (strain ATCC 49652 / DSM 12025 / NBRC 103806 / TLS) (Chlorobium tepidum) protein is Transcription elongation factor GreA.